Reading from the N-terminus, the 168-residue chain is Small ribosomal subunit protein uS5 (168 aa).

The S5 DRBM domain maps to 13–76 (IQEKLVAVRR…ENARRNMISV (64 aa)).

It belongs to the universal ribosomal protein uS5 family. In terms of assembly, part of the 30S ribosomal subunit. Contacts proteins S4 and S8.

Functionally, with S4 and S12 plays an important role in translational accuracy. In terms of biological role, located at the back of the 30S subunit body where it stabilizes the conformation of the head with respect to the body. The polypeptide is Small ribosomal subunit protein uS5 (Coxiella burnetii (strain RSA 493 / Nine Mile phase I)).